The primary structure comprises 638 residues: Chaperone protein HtpG (638 aa).

The a; substrate-binding stretch occupies residues 1–344 (MQKKETLEFQ…SNDLPLNVSR (344 aa)). A b region spans residues 345 to 560 (EILQNNENIY…ENDITTQMSK (216 aa)). The interval 561 to 638 (LLISTGQESP…LLLSNIIRLN (78 aa)) is c.

Belongs to the heat shock protein 90 family. In terms of assembly, homodimer.

The protein resides in the cytoplasm. In terms of biological role, molecular chaperone. Has ATPase activity. This chain is Chaperone protein HtpG, found in Wigglesworthia glossinidia brevipalpis.